We begin with the raw amino-acid sequence, 182 residues long: 5-formyltetrahydrofolate cyclo-ligase (182 aa).

Residues 1–21 (MIRQRRRALTPEQQQEMGQQA) are disordered. Over residues 11-21 (PEQQQEMGQQA) the composition is skewed to polar residues. Residues 128 to 135 (GMGGGFYD) and D167 contribute to the ATP site.

It belongs to the 5-formyltetrahydrofolate cyclo-ligase family.

The enzyme catalyses (6S)-5-formyl-5,6,7,8-tetrahydrofolate + ATP = (6R)-5,10-methenyltetrahydrofolate + ADP + phosphate. It participates in one-carbon metabolism; tetrahydrofolate interconversion. Its function is as follows. Involved in the removal of 5-formyltetrahydrofolate. In vitro, it is a potent inhibitor of various folate-dependent enzymes in the C1 metabolism network and in vivo it might function as a folate storage. 5-formyltetrahydrofolate is also used as an antifolate rescue agent in cancer chemotherapy. Catalyzes the irreversible ATP-dependent transformation of 5-formyltetrahydrofolate (5-CHO-THF) to form 5,10-methenyltetrahydrofolate (5,10-CH=THF). The reverse reaction is catalyzed by the serine hydroxymethyltransferase GlyA (SHMT). This chain is 5-formyltetrahydrofolate cyclo-ligase (ygfA), found in Escherichia coli O157:H7.